Here is a 305-residue protein sequence, read N- to C-terminus: UDP-3-O-acyl-N-acetylglucosamine deacetylase (305 aa).

Zn(2+) is bound by residues His-79, His-238, and Asp-242. His-265 (proton donor) is an active-site residue.

It belongs to the LpxC family. Requires Zn(2+) as cofactor.

The catalysed reaction is a UDP-3-O-[(3R)-3-hydroxyacyl]-N-acetyl-alpha-D-glucosamine + H2O = a UDP-3-O-[(3R)-3-hydroxyacyl]-alpha-D-glucosamine + acetate. The protein operates within glycolipid biosynthesis; lipid IV(A) biosynthesis; lipid IV(A) from (3R)-3-hydroxytetradecanoyl-[acyl-carrier-protein] and UDP-N-acetyl-alpha-D-glucosamine: step 2/6. Its function is as follows. Catalyzes the hydrolysis of UDP-3-O-myristoyl-N-acetylglucosamine to form UDP-3-O-myristoylglucosamine and acetate, the committed step in lipid A biosynthesis. The polypeptide is UDP-3-O-acyl-N-acetylglucosamine deacetylase (Aliivibrio fischeri (strain ATCC 700601 / ES114) (Vibrio fischeri)).